The sequence spans 215 residues: Adenylate kinase (215 aa).

10–15 (GSGKGT) provides a ligand contact to ATP. The interval 30 to 59 (STGDILREHVRNGTELGKEAKKYMDAGQLV) is NMP. AMP-binding positions include threonine 31, arginine 36, 57-59 (QLV), 85-88 (GYPR), and glutamine 92. The tract at residues 126 to 162 (GRRMCKCGRSYHIIFNPPKVPGKCDECGGELYHRDDD) is LID. Arginine 127 lines the ATP pocket. Zn(2+) contacts are provided by cysteine 130 and cysteine 132. 135–136 (SY) is a binding site for ATP. Residues cysteine 149 and cysteine 152 each coordinate Zn(2+). Arginine 159 and arginine 170 together coordinate AMP. Glycine 198 provides a ligand contact to ATP.

The protein belongs to the adenylate kinase family. In terms of assembly, monomer.

It localises to the cytoplasm. The enzyme catalyses AMP + ATP = 2 ADP. It participates in purine metabolism; AMP biosynthesis via salvage pathway; AMP from ADP: step 1/1. Its function is as follows. Catalyzes the reversible transfer of the terminal phosphate group between ATP and AMP. Plays an important role in cellular energy homeostasis and in adenine nucleotide metabolism. The chain is Adenylate kinase from Methanothrix thermoacetophila (strain DSM 6194 / JCM 14653 / NBRC 101360 / PT) (Methanosaeta thermophila).